We begin with the raw amino-acid sequence, 150 residues long: Single-stranded DNA-binding protein rim1, mitochondrial (150 aa).

Residues 1–22 (MLFLKSSRAFSKRLFSSSTVRY) constitute a mitochondrion transit peptide. In terms of domain architecture, SSB spans 25–125 (IQRLTLTGNL…HVSADVLFYP (101 aa)). Positions 127–150 (NKNGDESGEETHPELDADPMINSF) are disordered. Over residues 128–141 (KNGDESGEETHPEL) the composition is skewed to basic and acidic residues.

The protein resides in the mitochondrion. Its function is as follows. This protein binds preferentially and cooperatively to ss-DNA. Involved in mitochondrial DNA replication. The sequence is that of Single-stranded DNA-binding protein rim1, mitochondrial (rim1) from Schizosaccharomyces pombe (strain 972 / ATCC 24843) (Fission yeast).